The primary structure comprises 141 residues: Nucleoside diphosphate kinase (141 aa).

Residues K11, F59, R87, T93, R104, and N114 each coordinate ATP. The active-site Pros-phosphohistidine intermediate is H117.

Belongs to the NDK family. Homotetramer. Requires Mg(2+) as cofactor.

The protein resides in the cytoplasm. It catalyses the reaction a 2'-deoxyribonucleoside 5'-diphosphate + ATP = a 2'-deoxyribonucleoside 5'-triphosphate + ADP. The enzyme catalyses a ribonucleoside 5'-diphosphate + ATP = a ribonucleoside 5'-triphosphate + ADP. Functionally, major role in the synthesis of nucleoside triphosphates other than ATP. The ATP gamma phosphate is transferred to the NDP beta phosphate via a ping-pong mechanism, using a phosphorylated active-site intermediate. The protein is Nucleoside diphosphate kinase of Teredinibacter turnerae (strain ATCC 39867 / T7901).